A 362-amino-acid chain; its full sequence is uncharacterized protein (362 aa).

An N-acetylalanine modification is found at A2.

It belongs to the Gfo/Idh/MocA family. As to quaternary structure, homodimer.

This is an uncharacterized protein from Arabidopsis thaliana (Mouse-ear cress).